Here is a 304-residue protein sequence, read N- to C-terminus: UDP-N-acetylenolpyruvoylglucosamine reductase (304 aa).

In terms of domain architecture, FAD-binding PCMH-type spans 33 to 198 (RVGGPADILV…IEATIELESG (166 aa)). R177 is an active-site residue. The active-site Proton donor is the S227. The active site involves E297.

The protein belongs to the MurB family. FAD serves as cofactor.

The protein resides in the cytoplasm. The enzyme catalyses UDP-N-acetyl-alpha-D-muramate + NADP(+) = UDP-N-acetyl-3-O-(1-carboxyvinyl)-alpha-D-glucosamine + NADPH + H(+). The protein operates within cell wall biogenesis; peptidoglycan biosynthesis. Cell wall formation. The sequence is that of UDP-N-acetylenolpyruvoylglucosamine reductase from Clostridium perfringens (strain SM101 / Type A).